The following is a 33-amino-acid chain: Photosystem II reaction center protein Psb30 (33 aa).

A helical transmembrane segment spans residues 5–25 (IVFQLTSLVLILAAGPLVVVL).

Belongs to the Psb30/Ycf12 family. In terms of assembly, PSII is composed of 1 copy each of membrane proteins PsbA, PsbB, PsbC, PsbD, PsbE, PsbF, PsbH, PsbI, PsbJ, PsbK, PsbL, PsbM, PsbT, PsbX, PsbY, PsbZ, Psb30/Ycf12, peripheral proteins of the oxygen-evolving complex and a large number of cofactors. It forms dimeric complexes.

It localises to the plastid. The protein resides in the chloroplast thylakoid membrane. Its function is as follows. A core subunit of photosystem II (PSII), probably helps stabilize the reaction center. In Tetradesmus obliquus (Green alga), this protein is Photosystem II reaction center protein Psb30.